Reading from the N-terminus, the 123-residue chain is WAP four-disulfide core domain protein 5 (123 aa).

Positions methionine 1–glycine 24 are cleaved as a signal peptide. 2 WAP domains span residues lysine 27–arginine 73 and valine 74–valine 121. Disulfide bonds link cysteine 34/cysteine 62, cysteine 41/cysteine 66, cysteine 49/cysteine 61, cysteine 55/cysteine 70, cysteine 81/cysteine 109, cysteine 88/cysteine 113, cysteine 96/cysteine 108, and cysteine 102/cysteine 117.

The protein resides in the secreted. Putative acid-stable proteinase inhibitor. The protein is WAP four-disulfide core domain protein 5 (WFDC5) of Aotus nancymaae (Ma's night monkey).